Consider the following 346-residue polypeptide: Small ribosomal subunit biogenesis GTPase RsgA 1 (346 aa).

A CP-type G domain is found at 93–248 (AEQLIAANFD…VIDTPGMREF (156 aa)). Residues 138–141 (TKAD) and 190–198 (GSSGVGKSS) each bind GTP. Residues Cys-271, Cys-276, His-278, and Cys-284 each coordinate Zn(2+).

It belongs to the TRAFAC class YlqF/YawG GTPase family. RsgA subfamily. As to quaternary structure, monomer. Associates with 30S ribosomal subunit, binds 16S rRNA. Zn(2+) serves as cofactor.

It localises to the cytoplasm. In terms of biological role, one of several proteins that assist in the late maturation steps of the functional core of the 30S ribosomal subunit. Helps release RbfA from mature subunits. May play a role in the assembly of ribosomal proteins into the subunit. Circularly permuted GTPase that catalyzes slow GTP hydrolysis, GTPase activity is stimulated by the 30S ribosomal subunit. In Listeria monocytogenes serovar 1/2a (strain ATCC BAA-679 / EGD-e), this protein is Small ribosomal subunit biogenesis GTPase RsgA 1.